The primary structure comprises 297 residues: Phosphatidylglycerol--prolipoprotein diacylglyceryl transferase (297 aa).

Helical transmembrane passes span 20 to 40 (FITI…GLFV), 57 to 77 (EILP…YVIF), 105 to 125 (AVWE…ISII), and 133 to 153 (INLK…QSIG). R154 provides a ligand contact to a 1,2-diacyl-sn-glycero-3-phospho-(1'-sn-glycerol). The next 3 membrane-spanning stretches (helical) occupy residues 193-213 (PTFL…IIIF), 225-245 (GFIS…IEGL), and 266-286 (AQFI…FLRL).

This sequence belongs to the Lgt family.

It is found in the cell inner membrane. It catalyses the reaction L-cysteinyl-[prolipoprotein] + a 1,2-diacyl-sn-glycero-3-phospho-(1'-sn-glycerol) = an S-1,2-diacyl-sn-glyceryl-L-cysteinyl-[prolipoprotein] + sn-glycerol 1-phosphate + H(+). It participates in protein modification; lipoprotein biosynthesis (diacylglyceryl transfer). Functionally, catalyzes the transfer of the diacylglyceryl group from phosphatidylglycerol to the sulfhydryl group of the N-terminal cysteine of a prolipoprotein, the first step in the formation of mature lipoproteins. In Prochlorococcus marinus (strain MIT 9215), this protein is Phosphatidylglycerol--prolipoprotein diacylglyceryl transferase.